A 57-amino-acid polypeptide reads, in one-letter code: MSEIKIKDNESLDNALRRFKKQCAKSGVMAEVRKREHYEKPSVKRKKKAEAARKKKF.

Residues 35–57 (REHYEKPSVKRKKKAEAARKKKF) form a disordered region. Basic residues predominate over residues 43-57 (VKRKKKAEAARKKKF).

It belongs to the bacterial ribosomal protein bS21 family.

In Alkaliphilus metalliredigens (strain QYMF), this protein is Small ribosomal subunit protein bS21.